The following is a 928-amino-acid chain: DNA mismatch repair protein MutS (928 aa).

613–620 (GPNMAGKS) lines the ATP pocket. A compositionally biased stretch (basic and acidic residues) spans 854 to 872 (KAKSNKDDHRIDEKTENSS). Residues 854–880 (KAKSNKDDHRIDEKTENSSKKHKNKDS) are disordered.

The protein belongs to the DNA mismatch repair MutS family.

Its function is as follows. This protein is involved in the repair of mismatches in DNA. It is possible that it carries out the mismatch recognition step. This protein has a weak ATPase activity. In Clostridium beijerinckii (strain ATCC 51743 / NCIMB 8052) (Clostridium acetobutylicum), this protein is DNA mismatch repair protein MutS.